Here is a 386-residue protein sequence, read N- to C-terminus: uncharacterized protein (386 aa).

Transmembrane regions (helical) follow at residues 3–23 (WFSL…LVAI), 42–62 (LVGH…IFLW), 72–92 (FASF…SLFG), 102–122 (VPTI…LGVF), 145–165 (ILST…IAYF), 183–203 (FGGH…WLLL), 212–232 (WFLN…QIFL), 244–264 (TWGY…ITLV), 276–296 (ILVL…MIVG), 308–328 (VIAS…QELG), and 333–353 (LGKF…FLSS).

It to R.prowazekii RP382.

It is found in the cell membrane. This is an uncharacterized protein from Aquifex aeolicus (strain VF5).